The sequence spans 763 residues: MEKIRVYELAKQLNVSTKDLMSKLKDNKIEVKSHMSTLDKDQIAKVKSFYEKQKKVQTSQNNSKSNDENKKITNKNTEKTTEKISTVDSNKQNNSNKRFKPKHPRNNDEESVSHFDKIKHKNKSEMNEKRDLNDKKKNKNFKNTKNKNSNNNKNSKNNKNNKNNDHNRKDEAIKHETKEPKKFIIQPTITVKDLSEKISVSISELIMKLMELGIMANQNQEIDFDTASLVAGEFDVIVEQDEVEDFDDDDVFNLDFEDKKEDLKERPPVITVMGHVDHGKTSILDRIRNSRVAGREAGGITQHIGAYTIRVNDKKIVFLDTPGHEAFTAMRSRGAQVTDVSILVVAADDGVMPQTIEAINHSKAAGVPIIVAINKIDKENANIERVKTELAENGLVPEDWGGDTVLVPVSARTGEGIDDLLEMILMVAEMEELKANPNRLAVGTVIEAQLDKGRGPTATILVQKGTLKHSDMVFSGQASGRIRAMFNDQGKQVKKAGPSTPVLILGLNEVPEAGDMIYAVKDEKEARNYAQKIKDHNREEQIKSSSTMNLDELFGKISDGETKDLNIIIKTDVKGTIDAIKQSLIKLSNEEVKVNIIHGAVGGITESDVNLASASSAIIIGFNVRPTQVAMDMAKNESIEIRTYRVIYDAIEDVKNAITGMLKPQYQEEVLGRATVRDTFKVPGVGTVAGVYVNTGKVTRNATVRLLRDEILIFEGPVSSLKRYKDDVKELTQGYEGGMGLENYNDIKPGDVLEAYVLNEVQR.

Positions 52 to 178 (KQKKVQTSQN…KDEAIKHETK (127 aa)) are disordered. Residues 65–82 (SNDENKKITNKNTEKTTE) are compositionally biased toward basic and acidic residues. Polar residues predominate over residues 86-96 (TVDSNKQNNSN). Composition is skewed to basic and acidic residues over residues 105-116 (RNNDEESVSHFD) and 123-135 (KSEM…LNDK). A compositionally biased stretch (basic residues) spans 136 to 145 (KKNKNFKNTK). Residues 146-161 (NKNSNNNKNSKNNKNN) are compositionally biased toward low complexity. Residues 162–178 (KNNDHNRKDEAIKHETK) are compositionally biased toward basic and acidic residues. The 170-residue stretch at 265–434 (ERPPVITVMG…LMVAEMEELK (170 aa)) folds into the tr-type G domain. Residues 274–281 (GHVDHGKT) form a G1 region. Position 274–281 (274–281 (GHVDHGKT)) interacts with GTP. Residues 299–303 (GITQH) form a G2 region. Residues 320-323 (DTPG) form a G3 region. Residues 320–324 (DTPGH) and 374–377 (NKID) contribute to the GTP site. A G4 region spans residues 374-377 (NKID). Residues 410-412 (SAR) form a G5 region.

This sequence belongs to the TRAFAC class translation factor GTPase superfamily. Classic translation factor GTPase family. IF-2 subfamily.

Its subcellular location is the cytoplasm. In terms of biological role, one of the essential components for the initiation of protein synthesis. Protects formylmethionyl-tRNA from spontaneous hydrolysis and promotes its binding to the 30S ribosomal subunits. Also involved in the hydrolysis of GTP during the formation of the 70S ribosomal complex. In Finegoldia magna (strain ATCC 29328 / DSM 20472 / WAL 2508) (Peptostreptococcus magnus), this protein is Translation initiation factor IF-2.